The chain runs to 479 residues: NADH-quinone oxidoreductase subunit N (479 aa).

A run of 14 helical transmembrane segments spans residues 3–23 (MLYG…FQLI), 40–60 (IGFA…FNGI), 77–97 (IIIL…IKVA), 102–122 (HSEY…LVSA), 125–145 (FMVM…LTTF), 159–179 (YFIL…LVYG), 200–220 (MAVL…KLSI), 234–254 (APLV…LALL), 268–288 (FFYI…VGAF), 299–319 (FIAY…VANS), 327–347 (ISYF…AIII), 373–393 (SILI…AGFI), 409–429 (ELII…LNIV), and 452–472 (LVSI…MLFG).

It belongs to the complex I subunit 2 family. As to quaternary structure, NDH-1 is composed of 14 different subunits. Subunits NuoA, H, J, K, L, M, N constitute the membrane sector of the complex.

Its subcellular location is the cell inner membrane. It catalyses the reaction a quinone + NADH + 5 H(+)(in) = a quinol + NAD(+) + 4 H(+)(out). Its function is as follows. NDH-1 shuttles electrons from NADH, via FMN and iron-sulfur (Fe-S) centers, to quinones in the respiratory chain. The immediate electron acceptor for the enzyme in this species is believed to be ubiquinone. Couples the redox reaction to proton translocation (for every two electrons transferred, four hydrogen ions are translocated across the cytoplasmic membrane), and thus conserves the redox energy in a proton gradient. This is NADH-quinone oxidoreductase subunit N from Orientia tsutsugamushi (strain Ikeda) (Rickettsia tsutsugamushi).